The sequence spans 507 residues: Desmethyl-deoxy-podophyllotoxin synthase (507 aa).

The helical transmembrane segment at 1–21 threads the bilayer; the sequence is MEFLSFPLSSALLIILLFMLV. Position 440 (C440) interacts with heme.

The protein belongs to the cytochrome P450 family. It depends on heme as a cofactor. As to expression, rhizome-specific expression.

Its subcellular location is the membrane. The enzyme catalyses (-)-deoxypodophyllotoxin + reduced [NADPH--hemoprotein reductase] + O2 = (-)-4'-desmethyl-deoxypodophyllotoxin + formaldehyde + oxidized [NADPH--hemoprotein reductase] + H2O + H(+). Its pathway is aromatic compound metabolism; phenylpropanoid biosynthesis. In terms of biological role, cytochrome P450 involved in the biosynthesis of etoposide, a chemotherapeutic compound of the topoisomerase inhibitor family. Catalyzes the conversion of deoxypodophyllotoxin to desmethyl-deoxypodophyllotoxin. This is Desmethyl-deoxy-podophyllotoxin synthase from Sinopodophyllum hexandrum (Himalayan may apple).